Reading from the N-terminus, the 251-residue chain is PF03932 family protein CutC (251 aa).

This sequence belongs to the CutC family.

Its subcellular location is the cytoplasm. This Bacteroides fragilis (strain YCH46) protein is PF03932 family protein CutC.